Here is a 359-residue protein sequence, read N- to C-terminus: MKSYKITLLPGDGIGPEITNVTHKILDLVSRKFGFEIKFKEMPFGGSAIDSDGIPFPDRTLQECKNSDAVLLAAIGDPKYDELPREKRPETGLLNLRSSLDLFANIRPVKIIPSLTKASSLKEDFVKEVDLVVVRELTSGIYFGEPKGRIKTDKGERAFNTMTYTSEEVNRIAEIAFKLAKQRNQKVCSVDKANVLDVSQLWREETILVSNKYKDIELTHQYVDNAAMQLVRNPSQFDVILTGNLFGDILSDIAAMLTGSIGMLPSASLTTDGPGVFEPVHGSAPDIAGKDIANPIAMLLSAAMMLKIALNETEAATFLENAINEILNDGYRTSDLMSIQTTKQVGCSQMGELLAEKLK.

Substrate is bound by residues arginine 97, arginine 107, arginine 135, and aspartate 224. Mg(2+)-binding residues include aspartate 224, aspartate 248, and aspartate 252. 282–294 lines the NAD(+) pocket; that stretch reads GSAPDIAGKDIAN.

It belongs to the isocitrate and isopropylmalate dehydrogenases family. LeuB type 1 subfamily. In terms of assembly, homodimer. It depends on Mg(2+) as a cofactor. Mn(2+) is required as a cofactor.

It is found in the cytoplasm. The catalysed reaction is (2R,3S)-3-isopropylmalate + NAD(+) = 4-methyl-2-oxopentanoate + CO2 + NADH. It participates in amino-acid biosynthesis; L-leucine biosynthesis; L-leucine from 3-methyl-2-oxobutanoate: step 3/4. Functionally, catalyzes the oxidation of 3-carboxy-2-hydroxy-4-methylpentanoate (3-isopropylmalate) to 3-carboxy-4-methyl-2-oxopentanoate. The product decarboxylates to 4-methyl-2 oxopentanoate. In Prochlorococcus marinus (strain NATL2A), this protein is 3-isopropylmalate dehydrogenase.